Consider the following 388-residue polypeptide: UDP-N-acetylglucosamine--N-acetylmuramyl-(pentapeptide) pyrophosphoryl-undecaprenol N-acetylglucosamine transferase (388 aa).

Residues 15 to 17 (TGG), asparagine 125, arginine 168, serine 196, and glutamine 297 each bind UDP-N-acetyl-alpha-D-glucosamine.

This sequence belongs to the glycosyltransferase 28 family. MurG subfamily.

The protein resides in the cell inner membrane. The enzyme catalyses di-trans,octa-cis-undecaprenyl diphospho-N-acetyl-alpha-D-muramoyl-L-alanyl-D-glutamyl-meso-2,6-diaminopimeloyl-D-alanyl-D-alanine + UDP-N-acetyl-alpha-D-glucosamine = di-trans,octa-cis-undecaprenyl diphospho-[N-acetyl-alpha-D-glucosaminyl-(1-&gt;4)]-N-acetyl-alpha-D-muramoyl-L-alanyl-D-glutamyl-meso-2,6-diaminopimeloyl-D-alanyl-D-alanine + UDP + H(+). Its pathway is cell wall biogenesis; peptidoglycan biosynthesis. Cell wall formation. Catalyzes the transfer of a GlcNAc subunit on undecaprenyl-pyrophosphoryl-MurNAc-pentapeptide (lipid intermediate I) to form undecaprenyl-pyrophosphoryl-MurNAc-(pentapeptide)GlcNAc (lipid intermediate II). This is UDP-N-acetylglucosamine--N-acetylmuramyl-(pentapeptide) pyrophosphoryl-undecaprenol N-acetylglucosamine transferase from Novosphingobium aromaticivorans (strain ATCC 700278 / DSM 12444 / CCUG 56034 / CIP 105152 / NBRC 16084 / F199).